Reading from the N-terminus, the 184-residue chain is MKIAQEIRAGNVIMHGKDPMVVLKTEYSRGGRNSATVRMKLKSLIANFNTEVVFKADDKMDQVILDKKECTYSYFADPMYICMDSEYNQYEVEAENMGDSLNYLQDGMELEVVFYDGKAISVEVPTSVQREITWTEPAVKGDTSGKVLKPAKIATGFEIGVPIFVAQGDVVEIDTRTGEYRKRV.

Belongs to the elongation factor P family.

The protein resides in the cytoplasm. It participates in protein biosynthesis; polypeptide chain elongation. In terms of biological role, involved in peptide bond synthesis. Stimulates efficient translation and peptide-bond synthesis on native or reconstituted 70S ribosomes in vitro. Probably functions indirectly by altering the affinity of the ribosome for aminoacyl-tRNA, thus increasing their reactivity as acceptors for peptidyl transferase. This is Elongation factor P from Polaromonas sp. (strain JS666 / ATCC BAA-500).